A 426-amino-acid chain; its full sequence is MKQLRLETINKVQGTVNIPGSKSISNRALLLATLAKGTTTLTNLLDSDDIRYMLASLKQLGVNYRLSEDKTVCELDGLGAPINSNVAQTLFLGNAGTAMRPLCAALTLGEGEFILTGEPRMEERPIGDLVDALRQLGAEVTYLKSEGFPPLTINATGLNAGDVEIAGDLSSQFLTALLMVSPLAKGDVNIKIKGELVSKPYIDITLALMAQFGVKVINHDYERFEIKSGQSYVSPGKVLVEGDASSASYFLAAGAIKGGEVKVTGVGRLSIQGDVKFADVLEKMGAEIEWGDDYIISRVAKLNAVDLDMNHIPDAAMTIATAALFATGTTHIRNIYNWRIKETDRLAAMATELRKVGAIVDEGHDYISVTPPTKPHTANIDTYNDHRMAMCFSMLAFADCGITINDPDCTSKTFPDYFEQFAALAC.

3 residues coordinate 3-phosphoshikimate: lysine 22, serine 23, and arginine 27. Lysine 22 is a binding site for phosphoenolpyruvate. The phosphoenolpyruvate site is built by glycine 96 and arginine 124. Residues serine 170, serine 171, glutamine 172, serine 198, aspartate 314, asparagine 337, and lysine 341 each contribute to the 3-phosphoshikimate site. Phosphoenolpyruvate is bound at residue glutamine 172. Aspartate 314 serves as the catalytic Proton acceptor. 3 residues coordinate phosphoenolpyruvate: arginine 345, arginine 387, and lysine 412.

Belongs to the EPSP synthase family. As to quaternary structure, monomer.

Its subcellular location is the cytoplasm. It catalyses the reaction 3-phosphoshikimate + phosphoenolpyruvate = 5-O-(1-carboxyvinyl)-3-phosphoshikimate + phosphate. The protein operates within metabolic intermediate biosynthesis; chorismate biosynthesis; chorismate from D-erythrose 4-phosphate and phosphoenolpyruvate: step 6/7. In terms of biological role, catalyzes the transfer of the enolpyruvyl moiety of phosphoenolpyruvate (PEP) to the 5-hydroxyl of shikimate-3-phosphate (S3P) to produce enolpyruvyl shikimate-3-phosphate and inorganic phosphate. The polypeptide is 3-phosphoshikimate 1-carboxyvinyltransferase (Shewanella woodyi (strain ATCC 51908 / MS32)).